The following is a 642-amino-acid chain: Threonine--tRNA ligase (642 aa).

One can recognise a TGS domain in the interval 1-61; sequence MPVITLPDGS…ENDAQLSIIT (61 aa). A catalytic region spans residues 243 to 534; it reads DHRKIGKQLD…LTEEFAGFFP (292 aa). Lysine 286 is modified (N6-acetyllysine). 3 residues coordinate Zn(2+): cysteine 334, histidine 385, and histidine 511.

Belongs to the class-II aminoacyl-tRNA synthetase family. In terms of assembly, homodimer. The cofactor is Zn(2+).

It localises to the cytoplasm. The catalysed reaction is tRNA(Thr) + L-threonine + ATP = L-threonyl-tRNA(Thr) + AMP + diphosphate + H(+). Catalyzes the attachment of threonine to tRNA(Thr) in a two-step reaction: L-threonine is first activated by ATP to form Thr-AMP and then transferred to the acceptor end of tRNA(Thr). Also edits incorrectly charged L-seryl-tRNA(Thr). The protein is Threonine--tRNA ligase of Escherichia coli O157:H7.